Here is a 220-residue protein sequence, read N- to C-terminus: Putative F-box protein At3g20705 (220 aa).

The F-box domain occupies 1 to 51; sequence MMMMSNLPNDLVEEILSRVTVTFMRTVRSICKKWNALTKDRSFTNKYIRNI.

This is Putative F-box protein At3g20705 from Arabidopsis thaliana (Mouse-ear cress).